Consider the following 344-residue polypeptide: Ferredoxin--NADP reductase (344 aa).

Residues Ser-12, Asp-31, Lys-39, Tyr-43, Val-83, Ile-118, Asp-285, and Ser-326 each contribute to the FAD site.

The protein belongs to the ferredoxin--NADP reductase type 2 family. As to quaternary structure, homodimer. FAD serves as cofactor.

It carries out the reaction 2 reduced [2Fe-2S]-[ferredoxin] + NADP(+) + H(+) = 2 oxidized [2Fe-2S]-[ferredoxin] + NADPH. The protein is Ferredoxin--NADP reductase of Staphylococcus aureus (strain JH1).